The following is a 559-amino-acid chain: Serine/threonine-protein kinase VRK1 (559 aa).

The Protein kinase domain occupies 32–388 (YIVGKQFATG…EDDDEEEEVI (357 aa)). ATP is bound by residues 38 to 46 (FATGGFGRI) and lysine 61. Aspartate 167 (proton acceptor) is an active-site residue. 2 disordered regions span residues 315–419 (EAAQ…ATSD) and 448–559 (SSCE…SSEV). 2 stretches are compositionally biased toward polar residues: residues 405-418 (RSFNLGMTSSTATS) and 449-460 (SCESQYESNEPG). Positions 533–542 (TSARYQEKRA) are enriched in basic and acidic residues. Residues 545–559 (NTKPTFDDSSCSSEV) are compositionally biased toward polar residues.

It belongs to the protein kinase superfamily. CK1 Ser/Thr protein kinase family. VRK subfamily. Autophosphorylates in vitro.

The protein resides in the nucleus. It localises to the cytoplasm. It is found in the cajal body. The enzyme catalyses L-seryl-[protein] + ATP = O-phospho-L-seryl-[protein] + ADP + H(+). It catalyses the reaction L-threonyl-[protein] + ATP = O-phospho-L-threonyl-[protein] + ADP + H(+). Serine/threonine kinase that phosphorylates baf-1, thus regulating the association of baf-1 with chromatin and nuclear membrane proteins during nuclear envelope formation. May act through the egl-17 signaling pathway. Essential in hermaphrodites for formation of the vulva, uterus, and uterine seam cells and for development and maintenance of the somatic gonad and thus the germ line. Acts to prevent cep-1 from triggering an inappropriate cell cycle arrest, thereby promoting germ cell proliferation. Regulates anchor cell polarity and the timing of anchor cell invasion through the basement membranes separating vulval and somatic gonadal cells during the L3 larval stage. This Caenorhabditis briggsae protein is Serine/threonine-protein kinase VRK1.